Here is a 125-residue protein sequence, read N- to C-terminus: Urotensin-2 (125 aa).

A signal peptide spans 1-20 (MYKLASCCLLFIGFLNPLFS). A propeptide spanning residues 21 to 111 (LPLLDSGEVS…HLLARIRKPY (91 aa)) is cleaved from the precursor. A disulfide bond links Cys119 and Cys124.

It belongs to the urotensin-2 family.

The protein resides in the secreted. Functionally, highly potent vasoconstrictor. The sequence is that of Urotensin-2 (UTS2) from Macaca mulatta (Rhesus macaque).